The chain runs to 381 residues: Glycerol-3-phosphate dehydrogenase [NAD(+)] (381 aa).

Positions 1-27 (MTAMDRLDHVSNQLAAKRQKKNPEGKP) are disordered. Residues 34–39 (GSGNWG), Phe66, and Phe122 each bind NAD(+). Lys145 is a binding site for substrate. An NAD(+)-binding site is contributed by Ala178. Lys238 serves as the catalytic Proton acceptor. Residues Arg303 and Gln332 each contribute to the NAD(+) site. A substrate-binding site is contributed by 303–304 (RN).

It belongs to the NAD-dependent glycerol-3-phosphate dehydrogenase family.

The catalysed reaction is sn-glycerol 3-phosphate + NAD(+) = dihydroxyacetone phosphate + NADH + H(+). The polypeptide is Glycerol-3-phosphate dehydrogenase [NAD(+)] (GPD) (Pichia angusta (Yeast)).